We begin with the raw amino-acid sequence, 212 residues long: Peroxisomal membrane protein 4 (212 aa).

2 consecutive transmembrane segments (helical) span residues 97–117 and 153–173; these read GETH…LLFG and WDPF…LFEY. N-linked (GlcNAc...) asparagine glycosylation is present at Asn206.

It belongs to the peroxisomal membrane protein PXMP2/4 family. Interacts with PEX19.

It localises to the peroxisome membrane. The polypeptide is Peroxisomal membrane protein 4 (Pxmp4) (Mus musculus (Mouse)).